The chain runs to 342 residues: Transmembrane protein 115 homolog (342 aa).

Residues 1-21 (MQYSSRFLELNIPDSFLNINK) are Cytoplasmic-facing. Residues 22 to 42 (IPDATKFITVTYICLTATLFC) traverse the membrane as a helical segment. The Lumenal portion of the chain corresponds to 43–121 (IRRSLYNKLV…NWNSSKEMFK (79 aa)). An N-linked (GlcNAc...) asparagine glycan is attached at asparagine 114. Residues 122-142 (FIIVLGSLTNVLIIMLTLLVS) form a helical membrane-spanning segment. At 143–159 (FFSNKVRLDIPLDGNYT) the chain is on the cytoplasmic side. A helical transmembrane segment spans residues 160-180 (ILIGFPIIYRQLLPETTIIHL). The Lumenal portion of the chain corresponds to 181 to 207 (KTPQFLAKNFRFKLLPIFVMFTMTVTQ). Residues 208 to 228 (IIWFHHFAQLFSIWVTFFASW) form a helical membrane-spanning segment. Residues 229-342 (SYLRFFQKLA…QVLEERMVNP (114 aa)) lie on the Cytoplasmic side of the membrane.

It belongs to the TMEM115 family. In terms of assembly, homooligomer.

Its subcellular location is the golgi apparatus membrane. Its function is as follows. May play a role in retrograde transport of proteins from the Golgi to the endoplasmic reticulum. This Saccharomyces cerevisiae (strain ATCC 204508 / S288c) (Baker's yeast) protein is Transmembrane protein 115 homolog.